The primary structure comprises 367 residues: Cellular tumor antigen p53 (367 aa).

Residues M1–N47 form a transcription activation (acidic) region. The DNA-binding element occupies D86–M273. Positions 160, 163, 219, and 223 each coordinate Zn(2+). Residues R254–R261 are interaction with DNA. Over residues D262–D279 the composition is skewed to basic and acidic residues. Disordered stretches follow at residues D262–D306 and D332–D367. Positions K282 to A300 match the Bipartite nuclear localization signal motif. Positions S291–S302 are enriched in low complexity. The oligomerization stretch occupies residues N308–K337. Positions E322–L333 match the Nuclear export signal motif. The segment at A342–K363 is basic (repression of DNA-binding).

It belongs to the p53 family. As to quaternary structure, binds DNA as a homotetramer. The cofactor is Zn(2+).

It is found in the cytoplasm. Its subcellular location is the nucleus. In terms of biological role, multifunctional transcription factor that induces cell cycle arrest, DNA repair or apoptosis upon binding to its target DNA sequence. Acts as a tumor suppressor in many tumor types; induces growth arrest or apoptosis depending on the physiological circumstances and cell type. Negatively regulates cell division by controlling expression of a set of genes required for this process. One of the activated genes is an inhibitor of cyclin-dependent kinases. Apoptosis induction seems to be mediated either by stimulation of BAX and FAS antigen expression, or by repression of Bcl-2 expression. The polypeptide is Cellular tumor antigen p53 (tp53) (Tetraodon miurus (Congo puffer)).